A 383-amino-acid polypeptide reads, in one-letter code: Acetylornithine deacetylase (383 aa).

Residue H80 coordinates Zn(2+). Residue D82 is part of the active site. A Zn(2+)-binding site is contributed by D112. Residue E144 is part of the active site. Zn(2+) is bound by residues E145, E169, and H355.

Belongs to the peptidase M20A family. ArgE subfamily. Homodimer. The cofactor is Zn(2+). It depends on Co(2+) as a cofactor. Requires glutathione as cofactor.

It localises to the cytoplasm. The catalysed reaction is N(2)-acetyl-L-ornithine + H2O = L-ornithine + acetate. Its pathway is amino-acid biosynthesis; L-arginine biosynthesis; L-ornithine from N(2)-acetyl-L-ornithine (linear): step 1/1. Catalyzes the hydrolysis of the amide bond of N(2)-acetylated L-amino acids. Cleaves the acetyl group from N-acetyl-L-ornithine to form L-ornithine, an intermediate in L-arginine biosynthesis pathway, and a branchpoint in the synthesis of polyamines. The chain is Acetylornithine deacetylase from Shigella sonnei (strain Ss046).